A 169-amino-acid chain; its full sequence is Type II secretion system protein H (169 aa).

Residues 1-29 constitute a propeptide, leader sequence; that stretch reads MRVARLPLLHPHRAAPVVRRQLRGSSLLE. The residue at position 30 (M30) is an N-methylmethionine. A helical membrane pass occupies residues 32–52; sequence LVIALIALAGVLAAAALTGGI.

Belongs to the GSP H family. Type II secretion is composed of four main components: the outer membrane complex, the inner membrane complex, the cytoplasmic secretion ATPase and the periplasm-spanning pseudopilus. Interacts with core component XpsG. Interacts with minor pseudopilins XpsI and XpsJ. In terms of processing, cleaved by prepilin peptidase. Post-translationally, methylated by prepilin peptidase at the amino group of the N-terminal phenylalanine once the leader sequence is cleaved by prepilin peptidase.

The protein localises to the cell inner membrane. Its function is as follows. Component of the type II secretion system required for the energy-dependent secretion of extracellular factors such as proteases and toxins from the periplasm. Part of the pseudopilus tip complex that is critical for the recognition and binding of secretion substrates. This Xanthomonas campestris pv. campestris (strain ATCC 33913 / DSM 3586 / NCPPB 528 / LMG 568 / P 25) protein is Type II secretion system protein H (xpsH).